We begin with the raw amino-acid sequence, 126 residues long: Protein ApaG (126 aa).

An ApaG domain is found at 2 to 126; the sequence is SDPRYQVDVS…FRLAVPGALH (125 aa).

This is Protein ApaG from Pseudomonas fluorescens (strain Pf0-1).